The following is a 268-amino-acid chain: Resolvase (268 aa).

A Tyr recombinase domain is found at 47–250 (ELPKYLLAPE…FALDVAARHR (204 aa)). Catalysis depends on residues Arg-82, Lys-114, His-202, Arg-205, and His-228. Tyr-237 (O-(3'-phospho-DNA)-tyrosine intermediate) is an active-site residue.

Belongs to the 'phage' integrase family.

Acts as a repressor of transcription and as a site-specific resolvase that cleaves at the RfsF site. The sequence is that of Resolvase (resD) from Escherichia coli (strain K12).